Consider the following 184-residue polypeptide: Calmodulin-related protein (184 aa).

EF-hand domains lie at 8–43 (DQISEFKEAFSLFDKDGDGCITTKELGTVMRSLGQN), 44–79 (PTEAELQDMINEVDADGNGTIDFPEFLNLMARKMKD), 81–116 (DSEEELKEAFRVFDKDQNGFISAAELRHVMTNLGEK), and 117–152 (LTDEEVDEMIREADVDGDGQINYEEFVKVMMANRRR). Ca(2+) contacts are provided by aspartate 21, aspartate 23, aspartate 25, cysteine 27, glutamate 32, aspartate 57, aspartate 59, asparagine 61, threonine 63, glutamate 68, aspartate 94, aspartate 96, asparagine 98, and glutamate 105. Lysine 116 is modified (N6,N6,N6-trimethyllysine). Aspartate 130, aspartate 132, aspartate 134, glutamine 136, and glutamate 141 together coordinate Ca(2+). Residues 156–184 (EESKRSVNSNISRSNNGRKVRKRDRCTIL) form a disordered region. Residues 161-170 (SVNSNISRSN) are compositionally biased toward low complexity. A compositionally biased stretch (basic residues) spans 171–184 (NGRKVRKRDRCTIL).

This sequence belongs to the calmodulin family.

In terms of biological role, calmodulin mediates the control of a large number of enzymes, ion channels and other proteins by Ca(2+). Among the enzymes to be stimulated by the calmodulin-Ca(2+) complex are a number of protein kinases and phosphatases. The protein is Calmodulin-related protein (CAM53) of Petunia hybrida (Petunia).